Consider the following 367-residue polypeptide: MNTTANTTNIIVGLSGGVDSSVTAALLKQQGYQVRGVFMQNWEDDDNDEYCSIKQDSFDAIAVADIIGIDIDIVNFAAQYKDKVFAYFLQEYSAGRTPNPDVLCNAEIKFKCFLDYAVGQGADTIATGHYARKEVRNGVHYLLKGLDRNKDQSYFLYRLKPFQLERAIFPLGGLEKPEVRRLAAEFNLPTAAKKDSTGICFIGERPFREFLQKYLPTDNGKMVTPEGKTVGEHVGLMFYTLGQRKGLGIGGAGEPWFVAAKDLTKNELIVVQGHDHPLLYTRSLVMNDLSFTLPERPKAGRYTCKTRYRMADAPCELRYLDDETAELVFDEPQWAVTPGQSAVLYDGDICLGGGIIQTTDKPVIITR.

ATP-binding positions include 13-20 and Met-39; that span reads GLSGGVDS. The interaction with target base in tRNA stretch occupies residues 99–101; that stretch reads NPD. Cys-104 serves as the catalytic Nucleophile. A disulfide bridge connects residues Cys-104 and Cys-200. ATP is bound at residue Gly-128. The segment at 150–152 is interaction with tRNA; it reads KDQ. Catalysis depends on Cys-200, which acts as the Cysteine persulfide intermediate. Residues 307–308 are interaction with tRNA; that stretch reads RY.

It belongs to the MnmA/TRMU family.

The protein localises to the cytoplasm. It carries out the reaction S-sulfanyl-L-cysteinyl-[protein] + uridine(34) in tRNA + AH2 + ATP = 2-thiouridine(34) in tRNA + L-cysteinyl-[protein] + A + AMP + diphosphate + H(+). Its function is as follows. Catalyzes the 2-thiolation of uridine at the wobble position (U34) of tRNA, leading to the formation of s(2)U34. The chain is tRNA-specific 2-thiouridylase MnmA from Neisseria meningitidis serogroup C (strain 053442).